Here is a 130-residue protein sequence, read N- to C-terminus: DNA-directed RNA polymerase subunit omega (130 aa).

Disordered stretches follow at residues 79 to 98 (EPEP…VDAD) and 109 to 130 (EEEL…EEDE).

Belongs to the RNA polymerase subunit omega family. In terms of assembly, the RNAP catalytic core consists of 2 alpha, 1 beta, 1 beta' and 1 omega subunit. When a sigma factor is associated with the core the holoenzyme is formed, which can initiate transcription.

The catalysed reaction is RNA(n) + a ribonucleoside 5'-triphosphate = RNA(n+1) + diphosphate. In terms of biological role, promotes RNA polymerase assembly. Latches the N- and C-terminal regions of the beta' subunit thereby facilitating its interaction with the beta and alpha subunits. The polypeptide is DNA-directed RNA polymerase subunit omega (rpoZ) (Bradyrhizobium diazoefficiens (strain JCM 10833 / BCRC 13528 / IAM 13628 / NBRC 14792 / USDA 110)).